The chain runs to 261 residues: Small ribosomal subunit protein uS2 (261 aa).

The disordered stretch occupies residues 222 to 261; it reads GKALREQDGEANEEQPISEEEKKEVLEEAMSEEDFEGDKE. Composition is skewed to acidic residues over residues 230-239 and 248-261; these read GEANEEQPIS and EEAMSEEDFEGDKE.

It belongs to the universal ribosomal protein uS2 family.

In Campylobacter lari (strain RM2100 / D67 / ATCC BAA-1060), this protein is Small ribosomal subunit protein uS2.